Consider the following 90-residue polypeptide: Putative membrane protein insertion efficiency factor (90 aa).

Belongs to the UPF0161 family.

Its subcellular location is the cell membrane. Its function is as follows. Could be involved in insertion of integral membrane proteins into the membrane. In Lactococcus lactis subsp. cremoris (strain SK11), this protein is Putative membrane protein insertion efficiency factor.